The sequence spans 179 residues: uncharacterized protein (179 aa).

This is an uncharacterized protein from Sulfolobus islandicus rod-shaped virus 1 (SIRV-1).